We begin with the raw amino-acid sequence, 324 residues long: Putative F-box/kelch-repeat protein At5g28160 (324 aa).

Positions 7-54 (RPSFLSLPDEIILSCLARISRSYYPKLSLVCKTFRTLLISNELIVARL) constitute an F-box domain. One copy of the Kelch repeat lies at 170–216 (KIYVMGGCMADESVNWGEVFDIKTQTWEALPDPGPEFRFSSIRKIDV).

The sequence is that of Putative F-box/kelch-repeat protein At5g28160 from Arabidopsis thaliana (Mouse-ear cress).